The chain runs to 230 residues: RING finger protein 141 (230 aa).

A lipid anchor (N-myristoyl glycine) is attached at Gly-2. The segment at 155–192 (CCICMDGRADLILPCAHSFCQKCIDKWSDRHRNCPICR) adopts an RING-type zinc-finger fold.

As to expression, isoform 1 is testis-specific. Isoform 2 is expressed in heart, brain, skeletal muscle, kidney, pancreas, lung, liver and testis. Isoform 3 is expressed in heart, liver, and kidney.

It is found in the membrane. May be involved in spermatogenesis. This Mus musculus (Mouse) protein is RING finger protein 141 (Rnf141).